The following is a 461-amino-acid chain: Coagulation factor IX (461 aa).

The signal sequence occupies residues 1-28; sequence MQRVNMIMAESPGLITICLLGYLLSAEC. A propeptide spanning residues 29–46 is cleaved from the precursor; it reads TVFLDHENANKILNRPKR. The Ca(2+) site is built by Tyr47, Asn48, Glu53, Glu54, Glu61, Glu63, Glu66, Glu67, Glu72, Glu73, and Glu76. The Gla domain maps to 47-92; sequence YNSGKLEEFVQGNLERECMEEKCSFEEAREVFENTERTTEFWKQYV. 4-carboxyglutamate is present on residues Glu53, Glu54, Glu61, Glu63, Glu66, Glu67, Glu72, Glu73, Glu76, Glu79, and Glu82. Glu61 lines the Mg(2+) pocket. Cys64 and Cys69 are disulfide-bonded. Residue Glu66 coordinates Mg(2+). Glu72 serves as a coordination point for Mg(2+). Glu76 is a binding site for Mg(2+). Residue Glu82 coordinates Ca(2+). Residue Glu82 coordinates Mg(2+). An O-linked (GalNAc...) threonine glycan is attached at Thr85. Positions 86, 93, 94, and 96 each coordinate Ca(2+). A 4-carboxyglutamate modification is found at Glu86. Glu86 is a Mg(2+) binding site. Residues 93–129 enclose the EGF-like 1; calcium-binding domain; that stretch reads DGDQCESNPCLNGGSCKDDINSYECWCPFGFEGKNCE. 10 disulfide bridges follow: Cys97-Cys108, Cys102-Cys117, Cys119-Cys128, Cys134-Cys145, Cys141-Cys155, Cys157-Cys170, Cys178-Cys335, Cys252-Cys268, Cys382-Cys396, and Cys407-Cys435. Ser99 carries O-linked (Glc...) serine glycosylation. The O-linked (Fuc...) serine glycan is linked to Ser107. 2 residues coordinate Ca(2+): Asp110 and Asp111. (3R)-3-hydroxyaspartate is present on Asp110. Residue Ser114 is modified to Phosphoserine. Residues 130 to 171 enclose the EGF-like 2 domain; that stretch reads LDVTCNIKNGRCEQFCKNSADNKVVCSCTEGYRLAENQKSCE. Positions 192–226 are cleaved as a propeptide — activation peptide; it reads AETVFPDVDYVNSTEAETILDNITQSTQSFNDFTR. Tyr201 bears the Sulfotyrosine mark. The residue at position 204 (Ser204) is a Phosphoserine. Position 205 is a phosphothreonine; alternate (Thr205). The O-linked (GalNAc...) threonine; alternate glycan is linked to Thr205. Asn213 carries N-linked (GlcNAc...) asparagine glycosylation. Residues Thr215 and Thr225 are each glycosylated (O-linked (GalNAc...) threonine). The Peptidase S1 domain occupies 227–459; sequence VVGGEDAKPG…YVNWIKEKTK (233 aa). The active-site Charge relay system is His267. Residues Glu281, Asn283, Glu286, Glu288, and Glu291 each contribute to the Ca(2+) site. The active-site Charge relay system is the Asp315. The Charge relay system role is filled by Ser411.

This sequence belongs to the peptidase S1 family. As to quaternary structure, heterodimer of a light chain and a heavy chain; disulfide-linked. Interacts (inactive and activated) with F11 (activated) in calcium-dependent manner. Interacts with SERPINC1. Activated by factor XIa, which excises the activation peptide. The propeptide can also be removed by snake venom protease. Post-translationally, the iron and 2-oxoglutarate dependent 3-hydroxylation of aspartate and asparagine is (R) stereospecific within EGF domains. Activated by coagulation factor VIIa-tissue factor (F7-F3) complex in calcium-dependent manner. In terms of processing, predominantly O-glucosylated at Ser-99 by POGLUT1 in vitro.

Its subcellular location is the secreted. The catalysed reaction is Selective cleavage of Arg-|-Ile bond in factor X to form factor Xa.. In terms of biological role, factor IX is a vitamin K-dependent plasma protein that participates in the intrinsic pathway of blood coagulation by converting factor X to its active form in the presence of Ca(2+) ions, phospholipids, and factor VIIIa. In Pan troglodytes (Chimpanzee), this protein is Coagulation factor IX (F9).